The following is a 210-amino-acid chain: N-(5'-phosphoribosyl)anthranilate isomerase (210 aa).

The protein belongs to the TrpF family.

The enzyme catalyses N-(5-phospho-beta-D-ribosyl)anthranilate = 1-(2-carboxyphenylamino)-1-deoxy-D-ribulose 5-phosphate. The protein operates within amino-acid biosynthesis; L-tryptophan biosynthesis; L-tryptophan from chorismate: step 3/5. This chain is N-(5'-phosphoribosyl)anthranilate isomerase, found in Nostoc punctiforme (strain ATCC 29133 / PCC 73102).